The sequence spans 1429 residues: Probable ATP-dependent RNA helicase spindle-E (1429 aa).

The region spanning 121 to 288 is the Helicase ATP-binding domain; that stretch reads VNAINTHQVV…FSTKVSVPPV (168 aa). 134–141 is a binding site for ATP; that stretch reads GETGCGKT. A DEAH box motif is present at residues 234 to 237; it reads DEVH. The Helicase C-terminal domain maps to 349-521; the sequence is QSEQSYDDAK…NSVLKAKLLD (173 aa). Residues 933–996 enclose the Tudor domain; the sequence is AGVLTKGMMV…RLMTKELLSQ (64 aa).

Belongs to the DEAD box helicase family. DEAH subfamily.

The protein resides in the cytoplasm. The enzyme catalyses ATP + H2O = ADP + phosphate + H(+). Probable ATP-binding RNA helicase which plays a central role during spermatogenesis and oogenesis by repressing transposable elements and preventing their mobilization, which is essential for the germline integrity. Acts via the piRNA metabolic process, which mediates the repression of transposable elements during meiosis by forming complexes composed of piRNAs and Piwi and govern the methylation and subsequent repression of transposons. Involved in the repression of LTR retrotransposon copia. Also involved in telomere regulation by repressing specialized telomeric retroelements HeT-A, TAHRE, and TART; Drosophila telomeres being maintained by transposition of specialized telomeric retroelements. Involved in telomeric trans-silencing, a repression mechanism by which a transposon or a transgene inserted in subtelomeric heterochromatin has the capacity to repress in trans in the female germline, a homologous transposon, or transgene located in euchromatin. Involved in the repression of testis-expressed Stellate genes by the homologous Su(Ste) repeats. Required for anteroposterior and dorsoventral axis formation during oogenesis. The chain is Probable ATP-dependent RNA helicase spindle-E (spn-E) from Drosophila ananassae (Fruit fly).